Reading from the N-terminus, the 428-residue chain is Adenylosuccinate synthetase (428 aa).

GTP contacts are provided by residues 12–18 and 40–42; these read GDEGKGK and GHT. Asp13 acts as the Proton acceptor in catalysis. Mg(2+) contacts are provided by Asp13 and Gly40. IMP-binding positions include 13–16, 38–41, Thr129, Arg143, Gln224, Thr239, and Arg303; these read DEGK and NAGH. His41 (proton donor) is an active-site residue. 299–305 serves as a coordination point for substrate; sequence VTTGRIR. Residues Arg305, 331 to 333, and 410 to 412 contribute to the GTP site; these read KVD and AYG.

This sequence belongs to the adenylosuccinate synthetase family. As to quaternary structure, homodimer. Requires Mg(2+) as cofactor.

It is found in the cytoplasm. The enzyme catalyses IMP + L-aspartate + GTP = N(6)-(1,2-dicarboxyethyl)-AMP + GDP + phosphate + 2 H(+). Its pathway is purine metabolism; AMP biosynthesis via de novo pathway; AMP from IMP: step 1/2. Functionally, plays an important role in the de novo pathway of purine nucleotide biosynthesis. Catalyzes the first committed step in the biosynthesis of AMP from IMP. In Francisella tularensis subsp. novicida (strain U112), this protein is Adenylosuccinate synthetase.